The following is a 446-amino-acid chain: Methionine aminopeptidase 2 (446 aa).

Positions 1 to 91 (MAAQVTDALK…PPRVLLSNLF (91 aa)) are disordered. Residues 36 to 48 (EAEDSDDEEEEPV) are compositionally biased toward acidic residues. The span at 59 to 72 (KKKRKRKKKPKKKA) shows a compositional bias: basic residues. Residue H199 participates in substrate binding. Residues D219, D230, and H299 each coordinate a divalent metal cation. H307 contacts substrate. Residues E332 and E427 each contribute to the a divalent metal cation site.

Belongs to the peptidase M24A family. Methionine aminopeptidase eukaryotic type 2 subfamily. Co(2+) serves as cofactor. The cofactor is Zn(2+). Mn(2+) is required as a cofactor. Requires Fe(2+) as cofactor.

Its subcellular location is the cytoplasm. The catalysed reaction is Release of N-terminal amino acids, preferentially methionine, from peptides and arylamides.. Its function is as follows. Cotranslationally removes the N-terminal methionine from nascent proteins. The N-terminal methionine is often cleaved when the second residue in the primary sequence is small and uncharged (Met-Ala-, Cys, Gly, Pro, Ser, Thr, or Val). The sequence is that of Methionine aminopeptidase 2 from Sclerotinia sclerotiorum (strain ATCC 18683 / 1980 / Ss-1) (White mold).